The primary structure comprises 1159 residues: WASH complex subunit 5 (1159 aa).

This sequence belongs to the strumpellin family. As to quaternary structure, component of the WASH complex.

The protein resides in the early endosome. Its function is as follows. Acts at least in part as component of the WASH complex which seems to regulate washc1 nucleation-promoting factor (NPF) activity and is required for its membrane targeting during endosomal sorting. The protein is WASH complex subunit 5 of Xenopus tropicalis (Western clawed frog).